The chain runs to 346 residues: Holliday junction branch migration complex subunit RuvB (346 aa).

Positions 1–182 (MSEAARLIAP…FGIPVRLNFY (182 aa)) are large ATPase domain (RuvB-L). ATP is bound by residues R22, G63, K66, T67, T68, 129 to 131 (EDF), R172, Y182, and R219. Residue T67 participates in Mg(2+) binding. Residues 183-253 (TVEELELIVR…IADEALTRLL (71 aa)) are small ATPAse domain (RuvB-S). The tract at residues 256-346 (SMGLDQLDRR…SQFRLTLEDD (91 aa)) is head domain (RuvB-H). DNA is bound by residues R292, R311, and R316.

This sequence belongs to the RuvB family. In terms of assembly, homohexamer. Forms an RuvA(8)-RuvB(12)-Holliday junction (HJ) complex. HJ DNA is sandwiched between 2 RuvA tetramers; dsDNA enters through RuvA and exits via RuvB. An RuvB hexamer assembles on each DNA strand where it exits the tetramer. Each RuvB hexamer is contacted by two RuvA subunits (via domain III) on 2 adjacent RuvB subunits; this complex drives branch migration. In the full resolvosome a probable DNA-RuvA(4)-RuvB(12)-RuvC(2) complex forms which resolves the HJ.

The protein localises to the cytoplasm. It carries out the reaction ATP + H2O = ADP + phosphate + H(+). In terms of biological role, the RuvA-RuvB-RuvC complex processes Holliday junction (HJ) DNA during genetic recombination and DNA repair, while the RuvA-RuvB complex plays an important role in the rescue of blocked DNA replication forks via replication fork reversal (RFR). RuvA specifically binds to HJ cruciform DNA, conferring on it an open structure. The RuvB hexamer acts as an ATP-dependent pump, pulling dsDNA into and through the RuvAB complex. RuvB forms 2 homohexamers on either side of HJ DNA bound by 1 or 2 RuvA tetramers; 4 subunits per hexamer contact DNA at a time. Coordinated motions by a converter formed by DNA-disengaged RuvB subunits stimulates ATP hydrolysis and nucleotide exchange. Immobilization of the converter enables RuvB to convert the ATP-contained energy into a lever motion, pulling 2 nucleotides of DNA out of the RuvA tetramer per ATP hydrolyzed, thus driving DNA branch migration. The RuvB motors rotate together with the DNA substrate, which together with the progressing nucleotide cycle form the mechanistic basis for DNA recombination by continuous HJ branch migration. Branch migration allows RuvC to scan DNA until it finds its consensus sequence, where it cleaves and resolves cruciform DNA. The chain is Holliday junction branch migration complex subunit RuvB from Rhizobium meliloti (strain 1021) (Ensifer meliloti).